Here is a 131-residue protein sequence, read N- to C-terminus: Type-5 thionin (131 aa).

Residues 1 to 29 (MGGGQKGLESAIVCLLVLGLVLEQVQVEG) form the signal peptide. The propeptide at 67 to 131 (LASVRSSDEP…GDTLLASLDD (65 aa)) is acidic domain.

The protein belongs to the plant thionin (TC 1.C.44) family. Is disulfide-linked. In terms of tissue distribution, developing endosperm.

The protein localises to the secreted. In terms of biological role, thionins are small plant proteins which are toxic to animal cells. They seem to exert their toxic effect at the level of the cell membrane. Their precise function is not known. The protein is Type-5 thionin (TTHV) of Triticum aestivum (Wheat).